The following is a 394-amino-acid chain: Phosphopentomutase (394 aa).

Positions 15, 288, 293, 329, 330, and 341 each coordinate Mn(2+).

Belongs to the phosphopentomutase family. Mn(2+) serves as cofactor.

The protein resides in the cytoplasm. The catalysed reaction is 2-deoxy-alpha-D-ribose 1-phosphate = 2-deoxy-D-ribose 5-phosphate. The enzyme catalyses alpha-D-ribose 1-phosphate = D-ribose 5-phosphate. The protein operates within carbohydrate degradation; 2-deoxy-D-ribose 1-phosphate degradation; D-glyceraldehyde 3-phosphate and acetaldehyde from 2-deoxy-alpha-D-ribose 1-phosphate: step 1/2. In terms of biological role, isomerase that catalyzes the conversion of deoxy-ribose 1-phosphate (dRib-1-P) and ribose 1-phosphate (Rib-1-P) to deoxy-ribose 5-phosphate (dRib-5-P) and ribose 5-phosphate (Rib-5-P), respectively. The sequence is that of Phosphopentomutase from Bacillus pumilus (strain SAFR-032).